A 99-amino-acid chain; its full sequence is Small ribosomal subunit protein bS20 (99 aa).

Positions 1–20 are enriched in basic residues; sequence MASAKPKKKNPRLASGRKRA. The segment at 1–29 is disordered; that stretch reads MASAKPKKKNPRLASGRKRARQDVKLNAA.

It belongs to the bacterial ribosomal protein bS20 family.

In terms of biological role, binds directly to 16S ribosomal RNA. In Paracidovorax citrulli (strain AAC00-1) (Acidovorax citrulli), this protein is Small ribosomal subunit protein bS20.